We begin with the raw amino-acid sequence, 707 residues long: uncharacterized protein (707 aa).

Disordered regions lie at residues Ala-15 to Tyr-122 and Glu-667 to Glu-707. Composition is skewed to basic and acidic residues over residues Lys-18–Ile-32 and Glu-40–Lys-52. Ser-112 bears the Phosphoserine mark. The stretch at Glu-659–Glu-700 forms a coiled coil. Residues Ile-692–Glu-707 show a composition bias toward acidic residues.

The protein belongs to the NOC2 family.

It is found in the nucleus. Its subcellular location is the nucleolus. This is an uncharacterized protein from Schizosaccharomyces pombe (strain 972 / ATCC 24843) (Fission yeast).